The primary structure comprises 671 residues: DNA ligase (671 aa).

Residues 32-36 (DAEYD), 81-82 (SL), and Glu113 each bind NAD(+). Catalysis depends on Lys115, which acts as the N6-AMP-lysine intermediate. Arg136, Glu173, Lys290, and Lys314 together coordinate NAD(+). Zn(2+) contacts are provided by Cys408, Cys411, Cys426, and Cys432. The region spanning 593–671 (EIDSPFAGKT…EAEMLRLFGE (79 aa)) is the BRCT domain.

This sequence belongs to the NAD-dependent DNA ligase family. LigA subfamily. Mg(2+) is required as a cofactor. Requires Mn(2+) as cofactor.

It catalyses the reaction NAD(+) + (deoxyribonucleotide)n-3'-hydroxyl + 5'-phospho-(deoxyribonucleotide)m = (deoxyribonucleotide)n+m + AMP + beta-nicotinamide D-nucleotide.. Its function is as follows. DNA ligase that catalyzes the formation of phosphodiester linkages between 5'-phosphoryl and 3'-hydroxyl groups in double-stranded DNA using NAD as a coenzyme and as the energy source for the reaction. It is essential for DNA replication and repair of damaged DNA. The polypeptide is DNA ligase (Enterobacter sp. (strain 638)).